Consider the following 426-residue polypeptide: Serine--tRNA ligase (426 aa).

Residue 233 to 235 participates in L-serine binding; the sequence is TAE. 264 to 266 serves as a coordination point for ATP; sequence RSE. Position 287 (glutamate 287) interacts with L-serine. An ATP-binding site is contributed by 351–354; sequence EISS. Serine 387 contacts L-serine.

This sequence belongs to the class-II aminoacyl-tRNA synthetase family. Type-1 seryl-tRNA synthetase subfamily. In terms of assembly, homodimer. The tRNA molecule binds across the dimer.

The protein resides in the cytoplasm. The catalysed reaction is tRNA(Ser) + L-serine + ATP = L-seryl-tRNA(Ser) + AMP + diphosphate + H(+). It catalyses the reaction tRNA(Sec) + L-serine + ATP = L-seryl-tRNA(Sec) + AMP + diphosphate + H(+). The protein operates within aminoacyl-tRNA biosynthesis; selenocysteinyl-tRNA(Sec) biosynthesis; L-seryl-tRNA(Sec) from L-serine and tRNA(Sec): step 1/1. Catalyzes the attachment of serine to tRNA(Ser). Is also able to aminoacylate tRNA(Sec) with serine, to form the misacylated tRNA L-seryl-tRNA(Sec), which will be further converted into selenocysteinyl-tRNA(Sec). This chain is Serine--tRNA ligase, found in Clostridium botulinum (strain Hall / ATCC 3502 / NCTC 13319 / Type A).